We begin with the raw amino-acid sequence, 143 residues long: UPF0306 protein plu4501 (143 aa).

The protein belongs to the UPF0306 family.

This chain is UPF0306 protein plu4501, found in Photorhabdus laumondii subsp. laumondii (strain DSM 15139 / CIP 105565 / TT01) (Photorhabdus luminescens subsp. laumondii).